A 70-amino-acid polypeptide reads, in one-letter code: Small ribosomal subunit protein bS21 (70 aa).

This sequence belongs to the bacterial ribosomal protein bS21 family.

The polypeptide is Small ribosomal subunit protein bS21 (Polynucleobacter asymbioticus (strain DSM 18221 / CIP 109841 / QLW-P1DMWA-1) (Polynucleobacter necessarius subsp. asymbioticus)).